The chain runs to 232 residues: MIKLVLVRHGESLWNLENRFTGWTDVDLSENGLKEARRAGKILKKNGFVFDVAYTSVLKRAIRTLWIILYEMDLAWIPVFKSWRLNERHYGALQGLNKAETAKKYGEEQVHKWRRFVNVKPPELTKEDTRYPGNEYKYKDLNEEQIPLTENLADTERRVLEEWRGNIAKDLKEGKRVIISAHGNTLRALVKYLDDIPADNVANLNIPTGIPLVYELDEKLKPITHYYLSDKE.

Substrate is bound by residues 8-15 (RHGESLWN), 21-22 (TG), arginine 60, 87-90 (ERHY), lysine 98, 114-115 (RR), and 183-184 (GN). The Tele-phosphohistidine intermediate role is filled by histidine 9. The active-site Proton donor/acceptor is the glutamate 87.

Belongs to the phosphoglycerate mutase family. BPG-dependent PGAM subfamily.

The catalysed reaction is (2R)-2-phosphoglycerate = (2R)-3-phosphoglycerate. The protein operates within carbohydrate degradation; glycolysis; pyruvate from D-glyceraldehyde 3-phosphate: step 3/5. Catalyzes the interconversion of 2-phosphoglycerate and 3-phosphoglycerate. In Clostridium beijerinckii (strain ATCC 51743 / NCIMB 8052) (Clostridium acetobutylicum), this protein is 2,3-bisphosphoglycerate-dependent phosphoglycerate mutase.